Reading from the N-terminus, the 102-residue chain is UPF0751 protein DSY4013 (102 aa).

The protein belongs to the UPF0751 family.

The polypeptide is UPF0751 protein DSY4013 (Desulfitobacterium hafniense (strain Y51)).